We begin with the raw amino-acid sequence, 511 residues long: 2-isopropylmalate synthase (511 aa).

The region spanning 5–267 is the Pyruvate carboxyltransferase domain; it reads LIIFDTTLRD…DTNIDTMHIL (263 aa). Mn(2+) is bound by residues D14, H202, H204, and N238. A regulatory domain region spans residues 393–511; sequence KLVSLKVCTE…TVTNKAHPQI (119 aa).

Belongs to the alpha-IPM synthase/homocitrate synthase family. LeuA type 1 subfamily. In terms of assembly, homodimer. It depends on Mn(2+) as a cofactor.

It is found in the cytoplasm. The catalysed reaction is 3-methyl-2-oxobutanoate + acetyl-CoA + H2O = (2S)-2-isopropylmalate + CoA + H(+). The protein operates within amino-acid biosynthesis; L-leucine biosynthesis; L-leucine from 3-methyl-2-oxobutanoate: step 1/4. In terms of biological role, catalyzes the condensation of the acetyl group of acetyl-CoA with 3-methyl-2-oxobutanoate (2-ketoisovalerate) to form 3-carboxy-3-hydroxy-4-methylpentanoate (2-isopropylmalate). The chain is 2-isopropylmalate synthase from Vesicomyosocius okutanii subsp. Calyptogena okutanii (strain HA).